A 93-amino-acid chain; its full sequence is Small ribosomal subunit protein bS20c (93 aa).

Belongs to the bacterial ribosomal protein bS20 family.

It is found in the plastid. The protein resides in the chloroplast. In terms of biological role, binds directly to 16S ribosomal RNA. In Phaeodactylum tricornutum (strain CCAP 1055/1), this protein is Small ribosomal subunit protein bS20c.